Here is a 60-residue protein sequence, read N- to C-terminus: Anionic antimicrobial peptide 2 (60 aa).

As to expression, hemolymph.

The protein localises to the secreted. In terms of biological role, antimicrobial protein. Has antibacterial activity against the Gram-positive bacteria M.luteus (MIC=86.6 uM), L.monocytogenes (MIC=86.6 uM), and S.lutea (MIC=86.6 uM). Lacks antibacterial activity against the Gram-positive bacteria B.circulans and S.aureus, and the Gram-negative bacteria E.coli D31, E.coli ATCC 25922, and S.typhimurium. Has antifungal activity against P.pastoris (MIC=86.6 uM) and P.stipitis (MIC=90.9 uM), but lacks antifungal activity against A.niger, C.albicans, C.albidus, C.fructus, C.wickerhamii, F.oxysporum, S.cerevisiae, S.pombe, T.harzianum, and Z.marxianus. This is Anionic antimicrobial peptide 2 from Galleria mellonella (Greater wax moth).